A 200-amino-acid polypeptide reads, in one-letter code: UPF0301 protein BOV_0485 (200 aa).

This sequence belongs to the UPF0301 (AlgH) family.

This Brucella ovis (strain ATCC 25840 / 63/290 / NCTC 10512) protein is UPF0301 protein BOV_0485.